Consider the following 155-residue polypeptide: Ribosomal RNA large subunit methyltransferase H (155 aa).

S-adenosyl-L-methionine-binding positions include Leu72, Gly103, and 122 to 127 (LSALTL).

The protein belongs to the RNA methyltransferase RlmH family. As to quaternary structure, homodimer.

It is found in the cytoplasm. It catalyses the reaction pseudouridine(1915) in 23S rRNA + S-adenosyl-L-methionine = N(3)-methylpseudouridine(1915) in 23S rRNA + S-adenosyl-L-homocysteine + H(+). Specifically methylates the pseudouridine at position 1915 (m3Psi1915) in 23S rRNA. The chain is Ribosomal RNA large subunit methyltransferase H from Citrobacter koseri (strain ATCC BAA-895 / CDC 4225-83 / SGSC4696).